Reading from the N-terminus, the 88-residue chain is Large ribosomal subunit protein bL27 (88 aa).

Residues 1–21 (MAHKKGTGSTRNGRDSNAKRL) form a disordered region.

Belongs to the bacterial ribosomal protein bL27 family.

This Parasynechococcus marenigrum (strain WH8102) protein is Large ribosomal subunit protein bL27.